Here is a 506-residue protein sequence, read N- to C-terminus: MALGTLFLALAAGLSTASPPNILLIFADDLGYGDLGSYGHPSSTTPNLDQLAEGGLRFTDFYVPVSLCTPSRAALLTGRLPVRSGMYPGVLGPSSQGGLPLEEVTLAEVLAARGYLTGMAGKWHLGVGPEGAFLPPHQGFHRFLGIPYSHDQGPCQNLTCFPPDIPCKGGCDQGLVPIPLLANLTVEAQPPWLPGLEARYVSFSRDLMADAQRQGRPFFLYYASHHTHYPQFSGQSFTKRSGRGPFGDSLMELDGAVGALMTTVGDLGLLEETLVIFTADNGPELMRMSNGGCSGLLRCGKGTTFEGGVREPALVYWPGHITPGVTHELASSLDLLPTLAALTGAPLPNVTLDGVDISPLLLGTGKSPRKSVFFYPPYPDEIHGVFAVRNGKYKAHFFTQGSAHSDTTSDPACHAANRLTAHEPPLLYDLSQDPGENYNVLESIEGVSPEALQALKHIQLLKAQYDAAMTFGPSQIAKGEDPALQICCQPSCTPHPVCCHCPGSQS.

The first 17 residues, 1–17 (MALGTLFLALAAGLSTA), serve as a signal peptide directing secretion. Asp28, Asp29, and Cys68 together coordinate Ca(2+). Cys68 (nucleophile) is an active-site residue. Cys68 is modified (3-oxoalanine (Cys)). Residue Lys122 participates in substrate binding. His124 is a catalytic residue. Ser149 serves as a coordination point for substrate. 2 disulfide bridges follow: Cys155-Cys171 and Cys160-Cys167. An N-linked (GlcNAc...) asparagine glycan is attached at Asn157. The N-linked (GlcNAc...) asparagine glycan is linked to Asn183. His228 contributes to the substrate binding site. Ca(2+)-binding residues include Asp280 and Asn281. Disulfide bonds link Cys299–Cys413, Cys487–Cys499, Cys488–Cys501, and Cys492–Cys498. A substrate-binding site is contributed by Lys301. Asn349 is a glycosylation site (N-linked (GlcNAc...) asparagine).

This sequence belongs to the sulfatase family. Homodimer at neutral pH and homooctamer at acidic pH. Exists both as a single chain of 58 kDa (component A) or as a chain of 50 kDa (component B) linked by disulfide bond(s) to a 7 kDa chain (component C). Interacts with SUMF1. Requires Ca(2+) as cofactor. In terms of processing, the conversion to 3-oxoalanine (also known as C-formylglycine, FGly), of a serine or cysteine residue in prokaryotes and of a cysteine residue in eukaryotes, is critical for catalytic activity. This post-translational modification is severely defective in multiple sulfatase deficiency (MSD).

The protein resides in the endoplasmic reticulum. It is found in the lysosome. It carries out the reaction an N-acyl-1-beta-D-(3-O-sulfo)-galactosyl-sphing-4-enine + H2O = a beta-D-galactosyl-(1&lt;-&gt;1')-N-acylsphing-4-enine + sulfate + H(+). Its function is as follows. Hydrolyzes cerebroside sulfate. The polypeptide is Arylsulfatase A (Arsa) (Mus musculus (Mouse)).